The following is a 451-amino-acid chain: UDP-glycosyltransferase 76C4 (451 aa).

UDP-alpha-D-glucose is bound by residues Ser273, 332–334 (APQ), 349–357 (HNGWNSTVE), and 371–374 (RWDQ).

This sequence belongs to the UDP-glycosyltransferase family.

This is UDP-glycosyltransferase 76C4 (UGT76C4) from Arabidopsis thaliana (Mouse-ear cress).